The sequence spans 64 residues: uncharacterized protein (64 aa).

The protein belongs to the orthopoxviruses VACWR006 protein family.

This is an uncharacterized protein from Vaccinia virus (strain Western Reserve) (VACV).